The primary structure comprises 355 residues: MRKIIHIDMDCYFAAVEMRDFPQYRGKPLAVGGSSDRRGVISTCNYEARAFGVRSAMASAYALKLCPNLILVPGRMEVYKAVSQQIREIFSRYTSLIEPLSLDEAYLDVSDCSLYQGSATRIAEAIRSDIFKETGLTASAGVSPIKFVAKVASDLNKPNGQYVVSPDTLMHFVRALSLGKIPGVGKVTEEKLNALGLKTCADVQQVPQTLLTEHFGKFGAVLYERAHGRDERAIVSHRERKSVGVETTLPKDLHTREACLDVLSSLIPELNRRLGRSASGRRIHKLVVKLKFDDFRQTTIESRAEEPSVRLFESLLSQAFVRAEGRGIRLVGIAAGLVCRSEAEQEGSAQLALSL.

Residues 4 to 185 (IIHIDMDCYF…LSLGKIPGVG (182 aa)) enclose the UmuC domain. Residues Asp-8 and Asp-103 each contribute to the Mg(2+) site. Residue Glu-104 is part of the active site.

This sequence belongs to the DNA polymerase type-Y family. Monomer. Mg(2+) is required as a cofactor.

The protein resides in the cytoplasm. The enzyme catalyses DNA(n) + a 2'-deoxyribonucleoside 5'-triphosphate = DNA(n+1) + diphosphate. Poorly processive, error-prone DNA polymerase involved in untargeted mutagenesis. Copies undamaged DNA at stalled replication forks, which arise in vivo from mismatched or misaligned primer ends. These misaligned primers can be extended by PolIV. Exhibits no 3'-5' exonuclease (proofreading) activity. May be involved in translesional synthesis, in conjunction with the beta clamp from PolIII. The sequence is that of DNA polymerase IV from Shewanella amazonensis (strain ATCC BAA-1098 / SB2B).